Reading from the N-terminus, the 708-residue chain is Metabotropic glutamate receptor-like protein L (708 aa).

The N-terminal stretch at 1–24 (MKLIIKNLILLLVSCLYFLSNVSC) is a signal peptide. N-linked (GlcNAc...) asparagine glycosylation is found at N21, N235, N310, and N366. Residues 25-370 (DQEVHMALLL…TTGSINKTFM (346 aa)) lie on the Extracellular side of the membrane. Residues 371 to 391 (AVSILEMAICLIIGIIVIFFF) traverse the membrane as a helical segment. Residues 392–401 (SRNINIIYST) are Cytoplasmic-facing. Residues 402-422 (IPYCLTILLGASLIAVAIFLW) form a helical membrane-spanning segment. At 423-435 (NLRDLNTQICTSK) the chain is on the extracellular side. A helical transmembrane segment spans residues 436 to 456 (IWMASLGYNVLIGFIIIKSSL). At 457-479 (IYFKFKEMVKSKNEKISPIPFGR) the chain is on the cytoplasmic side. The helical transmembrane segment at 480 to 500 (IVLWFVPLLIIDCVLLIIYST) threads the bilayer. Over 501–531 (SGNPGKIDSLGLDGIGRYEYTQNCVNNLTGD) the chain is Extracellular. The N-linked (GlcNAc...) asparagine glycan is linked to N527. A helical membrane pass occupies residues 532–552 (IILYIILVFHGLQLLYGCVIA). The Cytoplasmic portion of the chain corresponds to 553–568 (WKTRVIDLEEFIEAHD). A helical membrane pass occupies residues 569–589 (FATAIYLITFCSFIIVILMVG). Residues 590–597 (VTSTSNRN) lie on the Extracellular side of the membrane. A helical transmembrane segment spans residues 598 to 618 (TIISACAIFSSFSCVLIIFGA). Residues 619–708 (KFWKIYKPVE…SSRAAAQNDN (90 aa)) lie on the Cytoplasmic side of the membrane. The tract at residues 638–681 (KPQKSYSGSGGSGNSSGSKSKKTSAHSSTSGVKSGTSAPTQTSQ) is disordered. Over residues 669–681 (VKSGTSAPTQTSQ) the composition is skewed to polar residues.

This sequence in the N-terminal section; belongs to the BMP lipoprotein family. The protein in the C-terminal section; belongs to the G-protein coupled receptor 3 family. GABA-B receptor subfamily.

The protein localises to the membrane. This Dictyostelium discoideum (Social amoeba) protein is Metabotropic glutamate receptor-like protein L (far1).